A 229-amino-acid chain; its full sequence is Flagellar calcium-binding protein TB-1.7G (229 aa).

Positions 1-25 are disordered; that stretch reads GSKNASNPKDGAASKGGKDGKTTAD. The span at 16–25 shows a compositional bias: basic and acidic residues; sequence GGKDGKTTAD. EF-hand domains follow at residues 44-79, 80-115, 126-161, and 163-198; these read ESKSRRIELFKQFDTNGTGKLGFREVLDGCYGILKL, DEFTTHLPDIVQRAFDKAKDLGNKVKGVGEEDLVEF, YDIFELTVMFDTMDKDGSLLLELQEFKEALPKLKEW, and VDITDATTVFNEIDTNGSGVVTFDEFSCWAVTKKLQ. Residues Asp57, Asn59, Thr61, Lys63, and Glu68 each coordinate Ca(2+). Ca(2+) is bound by residues Asp139, Asp141, Ser143, Glu150, Asp176, Asn178, Ser180, and Glu187. The interval 202–229 is disordered; sequence DPDDEENGANEGDGANAGDGVPAAEGSA. Over residues 210–221 the composition is skewed to low complexity; sequence ANEGDGANAGDG.

This sequence belongs to the calflagin family.

It is found in the cell projection. It localises to the cilium. The protein localises to the flagellum. In terms of biological role, may contribute to the rapid motility of the trypanosomes, playing a role either in flagellar structure or in calcium metabolism. Could alternate between a GDP-bound inactive form to a calcium/GTP-bound active form. This Trypanosoma brucei brucei protein is Flagellar calcium-binding protein TB-1.7G.